A 98-amino-acid polypeptide reads, in one-letter code: NADH-ubiquinone oxidoreductase chain 4L (98 aa).

Helical transmembrane passes span 2 to 22 (SPIY…TLLF), 26 to 46 (LMST…MVTS), and 61 to 81 (ITML…LVMI).

It belongs to the complex I subunit 4L family. Core subunit of respiratory chain NADH dehydrogenase (Complex I) which is composed of 45 different subunits.

The protein localises to the mitochondrion inner membrane. It carries out the reaction a ubiquinone + NADH + 5 H(+)(in) = a ubiquinol + NAD(+) + 4 H(+)(out). In terms of biological role, core subunit of the mitochondrial membrane respiratory chain NADH dehydrogenase (Complex I) which catalyzes electron transfer from NADH through the respiratory chain, using ubiquinone as an electron acceptor. Part of the enzyme membrane arm which is embedded in the lipid bilayer and involved in proton translocation. The protein is NADH-ubiquinone oxidoreductase chain 4L (MT-ND4L) of Nephelomys albigularis (Tomes's rice rat).